Here is a 119-residue protein sequence, read N- to C-terminus: Large ribosomal subunit protein bL20 (119 aa).

Belongs to the bacterial ribosomal protein bL20 family.

Functionally, binds directly to 23S ribosomal RNA and is necessary for the in vitro assembly process of the 50S ribosomal subunit. It is not involved in the protein synthesizing functions of that subunit. The chain is Large ribosomal subunit protein bL20 from Dechloromonas aromatica (strain RCB).